A 351-amino-acid chain; its full sequence is Tropomodulin-2 (351 aa).

Ser25 is subject to Phosphoserine.

It belongs to the tropomodulin family. Binds to the N-terminus of tropomyosin and to actin. In terms of tissue distribution, neuronal-tissue specific.

The protein localises to the cytoplasm. Its subcellular location is the cytoskeleton. Blocks the elongation and depolymerization of the actin filaments at the pointed end. The Tmod/TM complex contributes to the formation of the short actin protofilament, which in turn defines the geometry of the membrane skeleton. In Mus musculus (Mouse), this protein is Tropomodulin-2 (Tmod2).